Here is a 1025-residue protein sequence, read N- to C-terminus: Presequence protease, mitochondrial (1025 aa).

Histidine 90 contacts Zn(2+). Glutamate 93 functions as the Proton acceptor in the catalytic mechanism. Residue histidine 94 coordinates Zn(2+). Glutamate 166 is an active-site residue. Residue glutamate 197 coordinates Zn(2+).

Belongs to the peptidase M16 family. PreP subfamily. Monomer and homodimer; homodimerization is induced by binding of the substrate. Requires Zn(2+) as cofactor.

Its subcellular location is the mitochondrion intermembrane space. It localises to the mitochondrion matrix. Its function is as follows. Degrades mitochondrial transit peptides after their cleavage in the intermembrane space or in the matrix, and presequence peptides; clearance of these peptides is required to keep the presequence processing machinery running. Preferentially cleaves the N-terminal side of paired basic amino acid residues. Also degrades other unstructured peptides. May function as an ATP-dependent peptidase as opposed to a metalloendopeptidase. This Aspergillus oryzae (strain ATCC 42149 / RIB 40) (Yellow koji mold) protein is Presequence protease, mitochondrial (cym1).